Consider the following 158-residue polypeptide: SsrA-binding protein (158 aa).

This sequence belongs to the SmpB family.

It is found in the cytoplasm. Functionally, required for rescue of stalled ribosomes mediated by trans-translation. Binds to transfer-messenger RNA (tmRNA), required for stable association of tmRNA with ribosomes. tmRNA and SmpB together mimic tRNA shape, replacing the anticodon stem-loop with SmpB. tmRNA is encoded by the ssrA gene; the 2 termini fold to resemble tRNA(Ala) and it encodes a 'tag peptide', a short internal open reading frame. During trans-translation Ala-aminoacylated tmRNA acts like a tRNA, entering the A-site of stalled ribosomes, displacing the stalled mRNA. The ribosome then switches to translate the ORF on the tmRNA; the nascent peptide is terminated with the 'tag peptide' encoded by the tmRNA and targeted for degradation. The ribosome is freed to recommence translation, which seems to be the essential function of trans-translation. This is SsrA-binding protein from Caldanaerobacter subterraneus subsp. tengcongensis (strain DSM 15242 / JCM 11007 / NBRC 100824 / MB4) (Thermoanaerobacter tengcongensis).